The following is a 116-amino-acid chain: MQPGGDMSALLAQAQQMQQKLLETQQQLANAQVHGQGGGGLVEVVVKGSGEVVSVAIDPKVVDPGDIETLQDLIVGAMADASKQVTKLAQERLGALTSAMRPTAPPPTPPTYMAGT.

Residues 96–116 (LTSAMRPTAPPPTPPTYMAGT) form a disordered region.

It belongs to the YbaB/EbfC family. In terms of assembly, homodimer.

It localises to the cytoplasm. Its subcellular location is the nucleoid. Binds to DNA and alters its conformation. May be involved in regulation of gene expression, nucleoid organization and DNA protection. This chain is Nucleoid-associated protein MLBr02330, found in Mycobacterium leprae (strain Br4923).